A 172-amino-acid polypeptide reads, in one-letter code: UPF0254 protein Mlab_1743 (172 aa).

The protein belongs to the UPF0254 family.

This chain is UPF0254 protein Mlab_1743, found in Methanocorpusculum labreanum (strain ATCC 43576 / DSM 4855 / Z).